The primary structure comprises 496 residues: Cytochrome P450 71B12 (496 aa).

The helical transmembrane segment at 2–22 (SLWYIIVAFVFFSSMIIVRII) threads the bilayer. Residue Cys-436 coordinates heme.

Belongs to the cytochrome P450 family. It depends on heme as a cofactor.

Its subcellular location is the membrane. This is Cytochrome P450 71B12 (CYP71B12) from Arabidopsis thaliana (Mouse-ear cress).